Consider the following 433-residue polypeptide: FAD-dependent monooxygenase notI' (433 aa).

FAD is bound by residues glutamate 45 and arginine 117. Residue arginine 195 is part of the active site. The FAD site is built by aspartate 314 and alanine 327.

It belongs to the paxM FAD-dependent monooxygenase family. Requires FAD as cofactor.

The protein operates within alkaloid biosynthesis. FAD-dependent monooxygenase; part of the gene cluster that mediates the biosynthesis of notoamide, a fungal indole alkaloid that belongs to a family of natural products containing a characteristic bicyclo[2.2.2]diazaoctane core. The first step of notoamide biosynthesis involves coupling of L-proline and L-tryptophan by the bimodular NRPS notE', to produce cyclo-L-tryptophan-L-proline called brevianamide F. The reverse prenyltransferase notF' then acts as a deoxybrevianamide E synthase and converts brevianamide F to deoxybrevianamide E via reverse prenylation at C-2 of the indole ring leading to the bicyclo[2.2.2]diazaoctane core. Deoxybrevianamide E is further hydroxylated at C-6 of the indole ring, likely catalyzed by the cytochrome P450 monooxygenase notG', to yield 6-hydroxy-deoxybrevianamide E. 6-hydroxy-deoxybrevianamide E is a specific substrate of the prenyltransferase notC' for normal prenylation at C-7 to produce 6-hydroxy-7-prenyl-deoxybrevianamide, also called notoamide S. As the proposed pivotal branching point in notoamide biosynthesis, notoamide S can be diverted to notoamide E through an oxidative pyran ring closure putatively catalyzed by either notH' cytochrome P450 monooxygenase or the notD' FAD-linked oxidoreductase. This step would be followed by an indole 2,3-epoxidation-initiated pinacol-like rearrangement catalyzed by the notB' FAD-dependent monooxygenase leading to the formation of notoamide C and notoamide D. On the other hand notoamide S is converted to notoamide T by notH' (or notD'), a bifunctional oxidase that also functions as the intramolecular Diels-Alderase responsible for generation of (-)-notoamide T. To generate antipodal (+)-notoaminide T, notH (or notD) in Aspergillus strain MF297-2 is expected to catalyze a Diels-Alder reaction leading to the opposite stereochemistry. The remaining oxidoreductase notD' (or notH') likely catalyzes the oxidative pyran ring formation to yield (-)-stephacidin A. The FAD-dependent monooxygenase notI' is highly similar to notB' and is predicted to catalyze a similar conversion from (-)-stephacidin A to (+)-notoamide B via the 2,3-epoxidation of (-)-stephacidin A followed by a pinacol-type rearrangement. Finally, it remains unclear which enzyme could be responsible for the final hydroxylation steps leading to notoamide A and sclerotiamide. In Aspergillus versicolor, this protein is FAD-dependent monooxygenase notI'.